Here is a 401-residue protein sequence, read N- to C-terminus: Exodeoxyribonuclease 7 large subunit (401 aa).

The protein belongs to the XseA family. Heterooligomer composed of large and small subunits.

The protein resides in the cytoplasm. The catalysed reaction is Exonucleolytic cleavage in either 5'- to 3'- or 3'- to 5'-direction to yield nucleoside 5'-phosphates.. Bidirectionally degrades single-stranded DNA into large acid-insoluble oligonucleotides, which are then degraded further into small acid-soluble oligonucleotides. The sequence is that of Exodeoxyribonuclease 7 large subunit from Lachnoclostridium phytofermentans (strain ATCC 700394 / DSM 18823 / ISDg) (Clostridium phytofermentans).